We begin with the raw amino-acid sequence, 403 residues long: Chaperone protein DnaJ (403 aa).

Positions 4–69 (DYYEILGVAR…DKRRRYDQFG (66 aa)) constitute a J domain. The CR-type zinc finger occupies 159–240 (GVEKTIKIKK…CYGEGIKQGE (82 aa)). Cys-172, Cys-175, Cys-188, Cys-191, Cys-214, Cys-217, Cys-228, and Cys-231 together coordinate Zn(2+). 4 CXXCXGXG motif repeats span residues 172–179 (CRECNGTG), 188–195 (CPTCHGSG), 214–221 (CPTCGGEG), and 228–235 (CPSCYGEG).

Belongs to the DnaJ family. As to quaternary structure, homodimer. Requires Zn(2+) as cofactor.

It is found in the cytoplasm. Functionally, participates actively in the response to hyperosmotic and heat shock by preventing the aggregation of stress-denatured proteins and by disaggregating proteins, also in an autonomous, DnaK-independent fashion. Unfolded proteins bind initially to DnaJ; upon interaction with the DnaJ-bound protein, DnaK hydrolyzes its bound ATP, resulting in the formation of a stable complex. GrpE releases ADP from DnaK; ATP binding to DnaK triggers the release of the substrate protein, thus completing the reaction cycle. Several rounds of ATP-dependent interactions between DnaJ, DnaK and GrpE are required for fully efficient folding. Also involved, together with DnaK and GrpE, in the DNA replication of plasmids through activation of initiation proteins. In Chlorobaculum tepidum (strain ATCC 49652 / DSM 12025 / NBRC 103806 / TLS) (Chlorobium tepidum), this protein is Chaperone protein DnaJ.